We begin with the raw amino-acid sequence, 392 residues long: MPNFKSKKIKEINLPYSKDDVEFLWLAKNDNVSLIYTKVQEESFFLQIKKAQNGFVIKGDKHTKPSKIGYLQKALKIFKEGFCEDIINEAFGLKNNALIEKTPFIVDNFDELLSRLQGKIYIEIGFGSGRHLLYQAKENPNVLILGVEIYNPALTQVAKLAKAQNVNNILLIQSDARLLLSVLKSKSVEKIFLHFPVPWDKKPHRRVIGKDFCKECARVLVQNGRFELRTDSFEYFNFTLEQFLTFPAPKFSLRKNENLEISSKYEDRWKKQEKNIYDLWVWNFNQECKNYELNEFNLSSVEFSKEDLKKIEQNFKNITIKKDDFFLHFESIYKQDENLLLKVAFGAFNKPEHCYLHLDKTIDFAFKEPFKIQENIKAINELKEILKVQFKI.

Residues Glu123, Glu148, and Asp175 each contribute to the S-adenosyl-L-methionine site. 2 residues coordinate substrate: Lys201 and Asp231.

It belongs to the class I-like SAM-binding methyltransferase superfamily. TrmB family.

It carries out the reaction guanosine(46) in tRNA + S-adenosyl-L-methionine = N(7)-methylguanosine(46) in tRNA + S-adenosyl-L-homocysteine. The protein operates within tRNA modification; N(7)-methylguanine-tRNA biosynthesis. Catalyzes the formation of N(7)-methylguanine at position 46 (m7G46) in tRNA. This chain is tRNA (guanine-N(7)-)-methyltransferase, found in Campylobacter jejuni subsp. jejuni serotype O:2 (strain ATCC 700819 / NCTC 11168).